The sequence spans 495 residues: Membrane-bound lytic murein transglycosylase F (495 aa).

A signal peptide spans 1 to 30 (MSRIRHHRFIQSCLVISTLLITLTGCQVES). Residues 31–270 (EPKTKLEQIR…LLEEKYFGHV (240 aa)) form a non-LT domain region. Residues 272–495 (SFDYVDTRAF…SVSQAIETKK (224 aa)) form an LT domain region. The active site involves Glu-315.

The protein in the N-terminal section; belongs to the bacterial solute-binding protein 3 family. It in the C-terminal section; belongs to the transglycosylase Slt family.

The protein localises to the cell outer membrane. The enzyme catalyses Exolytic cleavage of the (1-&gt;4)-beta-glycosidic linkage between N-acetylmuramic acid (MurNAc) and N-acetylglucosamine (GlcNAc) residues in peptidoglycan, from either the reducing or the non-reducing ends of the peptidoglycan chains, with concomitant formation of a 1,6-anhydrobond in the MurNAc residue.. Functionally, murein-degrading enzyme that degrades murein glycan strands and insoluble, high-molecular weight murein sacculi, with the concomitant formation of a 1,6-anhydromuramoyl product. Lytic transglycosylases (LTs) play an integral role in the metabolism of the peptidoglycan (PG) sacculus. Their lytic action creates space within the PG sacculus to allow for its expansion as well as for the insertion of various structures such as secretion systems and flagella. This chain is Membrane-bound lytic murein transglycosylase F, found in Aliivibrio fischeri (strain ATCC 700601 / ES114) (Vibrio fischeri).